Reading from the N-terminus, the 419-residue chain is GTPase Obg (419 aa).

Residues 1–158 (MFVDQARIFV…KWIRLELKLL (158 aa)) enclose the Obg domain. Residues 159–327 (ADVGLVGFPN…LMGKTYALLQ (169 aa)) form the OBG-type G domain. Residues 165-172 (GFPNAGKS), 190-194 (FTTLV), 212-215 (DIPG), 282-285 (NKMD), and 308-310 (SAV) contribute to the GTP site. Positions 172 and 192 each coordinate Mg(2+). The 78-residue stretch at 342-419 (RRFEEELPFK…IKDFEFEFTE (78 aa)) folds into the OCT domain.

This sequence belongs to the TRAFAC class OBG-HflX-like GTPase superfamily. OBG GTPase family. As to quaternary structure, monomer. It depends on Mg(2+) as a cofactor.

The protein resides in the cytoplasm. Its function is as follows. An essential GTPase which binds GTP, GDP and possibly (p)ppGpp with moderate affinity, with high nucleotide exchange rates and a fairly low GTP hydrolysis rate. Plays a role in control of the cell cycle, stress response, ribosome biogenesis and in those bacteria that undergo differentiation, in morphogenesis control. This Syntrophomonas wolfei subsp. wolfei (strain DSM 2245B / Goettingen) protein is GTPase Obg.